The primary structure comprises 217 residues: Pyridoxine/pyridoxamine 5'-phosphate oxidase (217 aa).

Substrate is bound by residues 13–16 (RREY) and lysine 71. FMN contacts are provided by residues 66–71 (RTVLLK), 81–82 (YT), arginine 87, lysine 88, and glutamine 110. Positions 128, 132, and 136 each coordinate substrate. FMN contacts are provided by residues 145 to 146 (QS) and tryptophan 190. A substrate-binding site is contributed by 196–198 (RLH). Arginine 200 provides a ligand contact to FMN.

It belongs to the pyridoxamine 5'-phosphate oxidase family. Homodimer. FMN serves as cofactor.

It catalyses the reaction pyridoxamine 5'-phosphate + O2 + H2O = pyridoxal 5'-phosphate + H2O2 + NH4(+). It carries out the reaction pyridoxine 5'-phosphate + O2 = pyridoxal 5'-phosphate + H2O2. The protein operates within cofactor metabolism; pyridoxal 5'-phosphate salvage; pyridoxal 5'-phosphate from pyridoxamine 5'-phosphate: step 1/1. Its pathway is cofactor metabolism; pyridoxal 5'-phosphate salvage; pyridoxal 5'-phosphate from pyridoxine 5'-phosphate: step 1/1. Catalyzes the oxidation of either pyridoxine 5'-phosphate (PNP) or pyridoxamine 5'-phosphate (PMP) into pyridoxal 5'-phosphate (PLP). The protein is Pyridoxine/pyridoxamine 5'-phosphate oxidase of Rubrobacter xylanophilus (strain DSM 9941 / JCM 11954 / NBRC 16129 / PRD-1).